Here is a 537-residue protein sequence, read N- to C-terminus: Biotin carboxylase, chloroplastic (537 aa).

A chloroplast-targeting transit peptide spans 1–71 (MDASMITNSK…ATSGGLGVTC (71 aa)). ATP is bound by residues K188, K230, 236-237 (GG), 272-275 (EKFV), and H280. An ATP-grasp domain is found at 192 to 389 (RETMKNAGVP…LIEEQIRVAM (198 aa)). K309 contacts hydrogencarbonate. Residues E347 and E360 each coordinate ATP. Mg(2+)-binding residues include E347, E360, and N362. Mn(2+) is bound by residues E347, E360, and N362. R364, V367, and R410 together coordinate hydrogencarbonate. Residue R364 is part of the active site. R410 provides a ligand contact to biotin.

As to quaternary structure, acetyl-CoA carboxylase is a heterohexamer composed of biotin carboxyl carrier protein, biotin carboxylase and two subunits each of ACCase subunit alpha and ACCase plastid-coded subunit beta (accD). It depends on Mg(2+) as a cofactor. Requires Mn(2+) as cofactor. In terms of tissue distribution, accumulates in fatty acids synthesizing tissues. Mostly expressed in siliques, developing leaves, and flowers, present in roots and embryos (especially at torpedo stage), and, to a lower extent, in mature leaves.

The protein localises to the plastid. It is found in the chloroplast. It carries out the reaction N(6)-biotinyl-L-lysyl-[protein] + hydrogencarbonate + ATP = N(6)-carboxybiotinyl-L-lysyl-[protein] + ADP + phosphate + H(+). The protein operates within lipid metabolism; malonyl-CoA biosynthesis; malonyl-CoA from acetyl-CoA: step 1/1. In terms of biological role, this protein is a component of the acetyl coenzyme A carboxylase complex; first, biotin carboxylase catalyzes the carboxylation of the carrier protein and then the transcarboxylase transfers the carboxyl group to form malonyl-CoA. The sequence is that of Biotin carboxylase, chloroplastic (CAC2) from Arabidopsis thaliana (Mouse-ear cress).